Reading from the N-terminus, the 236-residue chain is Ascorbate-specific transmembrane electron transporter 1 (236 aa).

Topologically, residues 1–11 (MGLGLGVRAAP) are cytoplasmic. The helical transmembrane segment at 12–32 (FTYAAHALAVAAAAMVLVWSI) threads the bilayer. Residues 15–219 (AAHALAVAAA…FGASVVVAAI (205 aa)) form the Cytochrome b561 domain. Topologically, residues 33 to 50 (QFRGGLAIESTNKNLIFN) are extracellular. The chain crosses the membrane as a helical span at residues 51-71 (VHPVLMLIGYVIIGGEAIMVY). His52 contacts heme b. Residue 67–75 (AIMVYRVLP) coordinates L-ascorbate. Residues 72 to 84 (RVLPTSNHDTTKL) lie on the Cytoplasmic side of the membrane. A helical membrane pass occupies residues 85–105 (IHLILHGIALVLGAVGIYFAF). The heme b site is built by His86 and His120. Over 106 to 122 (KNHNESGIANLYSLHSW) the chain is Extracellular. 116–125 (LYSLHSWIGI) is a binding site for monodehydro-L-ascorbate radical. The helical transmembrane segment at 123 to 143 (IGIGTITLYGIQWIIGFVTFF) threads the bilayer. Topologically, residues 144–153 (FPGAAPNVKK) are cytoplasmic. The helical transmembrane segment at 154 to 174 (GVLPWHVLFGLFVYILALANA) threads the bilayer. His159 serves as a coordination point for heme b. The Extracellular portion of the chain corresponds to 175–201 (ELGFLEKLTFLESSGLDKYGTEAFLVN). Residues 202–222 (FTALVVVLFGASVVVAAIAPV) form a helical membrane-spanning segment. Topologically, residues 223–236 (RLEEPQGYDPIPEN) are cytoplasmic.

The cofactor is heme b.

The protein resides in the membrane. Its activity is regulated as follows. Inhibited by diethylpyrocarbonate. Functionally, two-heme-containing cytochrome. Catalyzes ascorbate-dependent trans-membrane electron transfer by utilizing a concerted H(+)/e(-) transfer mechanism. The chain is Ascorbate-specific transmembrane electron transporter 1 (ZCYB) from Zea mays (Maize).